We begin with the raw amino-acid sequence, 75 residues long: Metallothionein-like protein 1B (75 aa).

This sequence belongs to the metallothionein superfamily. Type 15 family.

Its function is as follows. Metallothioneins have a high content of cysteine residues that bind various heavy metals. The polypeptide is Metallothionein-like protein 1B (MT1B) (Vicia faba (Broad bean)).